Consider the following 243-residue polypeptide: Cell division protein ZipA (243 aa).

The Periplasmic portion of the chain corresponds to 1–4 (MSDM). The helical transmembrane segment at 5–25 (AMIRIGILIAGLLLVAAIFLF) threads the bilayer. Over 26-243 (GRPKKSPQGR…APPLTKSPRW (218 aa)) the chain is Cytoplasmic. The segment at 30–89 (KSPQGRRVDKGEGQPRERREPVISSEFGAEGDAAERAEGVEQSELNLEGQDASGGNEVGK) is disordered. A compositionally biased stretch (basic and acidic residues) spans 35 to 50 (RRVDKGEGQPRERREP).

The protein belongs to the ZipA family. As to quaternary structure, interacts with FtsZ via their C-terminal domains.

The protein resides in the cell inner membrane. Functionally, essential cell division protein that stabilizes the FtsZ protofilaments by cross-linking them and that serves as a cytoplasmic membrane anchor for the Z ring. Also required for the recruitment to the septal ring of downstream cell division proteins. This is Cell division protein ZipA from Xanthomonas axonopodis pv. citri (strain 306).